The chain runs to 285 residues: Protein unc-1 (285 aa).

2 helical membrane passes run 27-47 (IGTI…IVTF) and 69-89 (IGRL…IPCI).

This sequence belongs to the band 7/mec-2 family.

It is found in the cell membrane. Its subcellular location is the cell junction. It localises to the gap junction. This chain is Protein unc-1 (unc-1), found in Caenorhabditis elegans.